The primary structure comprises 414 residues: S-adenosylmethionine synthase (414 aa).

His11 contributes to the ATP binding site. Residue Asp13 participates in Mg(2+) binding. Glu39 is a binding site for K(+). L-methionine-binding residues include Glu52 and Gln95. Residues Gln95–Met105 are flexible loop. ATP is bound by residues Asp169–Lys171, Lys245–Phe246, Asp254, Arg260–Lys261, Ala277, and Lys281. An L-methionine-binding site is contributed by Asp254. L-methionine is bound at residue Lys285.

Belongs to the AdoMet synthase family. As to quaternary structure, homotetramer; dimer of dimers. It depends on Mg(2+) as a cofactor. The cofactor is K(+).

It is found in the cytoplasm. The enzyme catalyses L-methionine + ATP + H2O = S-adenosyl-L-methionine + phosphate + diphosphate. The protein operates within amino-acid biosynthesis; S-adenosyl-L-methionine biosynthesis; S-adenosyl-L-methionine from L-methionine: step 1/1. In terms of biological role, catalyzes the formation of S-adenosylmethionine (AdoMet) from methionine and ATP. The overall synthetic reaction is composed of two sequential steps, AdoMet formation and the subsequent tripolyphosphate hydrolysis which occurs prior to release of AdoMet from the enzyme. The chain is S-adenosylmethionine synthase from Synechococcus sp. (strain JA-2-3B'a(2-13)) (Cyanobacteria bacterium Yellowstone B-Prime).